Consider the following 220-residue polypeptide: Inner kinetochore subunit fta3 (220 aa).

Belongs to the CENP-H/MCM16 family. As to quaternary structure, component of the inner kinetochore constitutive centromere-associated network (CCAN) (also known as central kinetochore Sim4 complex in fission yeast), which is composed of at least cnl2, cnp3, cnp20, fta1, fta2, fta3, fta4, fta6, fta7, mal2, mhf1, mhf2, mis6, mis15, mis17, sim4 and wip1.

It is found in the nucleus. The protein localises to the chromosome. The protein resides in the centromere. It localises to the kinetochore. Functionally, component of the kinetochore, a multiprotein complex that assembles on centromeric DNA and attaches chromosomes to spindle microtubules, mediating chromosome segregation and sister chromatid segregation during meiosis and mitosis. Component of the inner kinetochore constitutive centromere-associated network (CCAN), which serves as a structural platform for outer kinetochore assembly. Fta2, fta3 and fta4 associate with the central core (cnt) and inner repeat (inr) region of the centromere. This is Inner kinetochore subunit fta3 (fta3) from Schizosaccharomyces pombe (strain 972 / ATCC 24843) (Fission yeast).